We begin with the raw amino-acid sequence, 152 residues long: Protein-export protein SecB (152 aa).

The protein belongs to the SecB family. Homotetramer, a dimer of dimers. One homotetramer interacts with 1 SecA dimer.

It is found in the cytoplasm. In terms of biological role, one of the proteins required for the normal export of preproteins out of the cell cytoplasm. It is a molecular chaperone that binds to a subset of precursor proteins, maintaining them in a translocation-competent state. It also specifically binds to its receptor SecA. The chain is Protein-export protein SecB from Rickettsia peacockii (strain Rustic).